The primary structure comprises 165 residues: Bacterial non-heme ferritin (165 aa).

Positions 1 to 145 (MLKPEMIEKL…SIIDKLSLAG (145 aa)) constitute a Ferritin-like diiron domain. Glu-17, Glu-49, Glu-50, His-53, Glu-94, Glu-126, Gln-127, and Glu-130 together coordinate Fe cation.

The protein belongs to the ferritin family. Prokaryotic subfamily. Homooligomer of 24 subunits that assemble into a spherical protein shell (12 +/- 1 nM diameter) that can sequester at least 2000 iron atoms.

It is found in the cytoplasm. It catalyses the reaction 4 Fe(2+) + O2 + 6 H2O = 4 iron(III) oxide-hydroxide + 12 H(+). Its function is as follows. Iron-storage protein. In Escherichia coli O157:H7, this protein is Bacterial non-heme ferritin (ftnA).